Consider the following 391-residue polypeptide: Metallophosphoesterase 1 (391 aa).

A helical transmembrane segment spans residues 25 to 45; that stretch reads TVVIISVLLFCEYFIYHLVIF. D72, D114, N152, H244, H298, and H300 together coordinate a divalent metal cation. The chain crosses the membrane as a helical span at residues 352–372; sequence VLATYGAAAVFLVVLILAHLE.

It belongs to the metallophosphoesterase superfamily. MPPE1 family. As to quaternary structure, interacts with GPI-anchor proteins (via the GPI portion). Interacts with TMED10. Mn(2+) serves as cofactor.

Its subcellular location is the endoplasmic reticulum-Golgi intermediate compartment membrane. Functionally, metallophosphoesterase that catalyzes the removal of a side-chain ethanolamine-phosphate (EtNP) from the second mannose of the GPI-anchor protein intermediate. Participates in the glycan remodeling steps of GPI-anchor maturation to allow an efficient transport of GPI-anchor proteins from the endoplasmic reticulum to the Golgi. The sequence is that of Metallophosphoesterase 1 from Cricetulus griseus (Chinese hamster).